The chain runs to 241 residues: tRNA pseudouridine synthase B (241 aa).

The active-site Nucleophile is Asp-45.

This sequence belongs to the pseudouridine synthase TruB family. Type 1 subfamily.

It carries out the reaction uridine(55) in tRNA = pseudouridine(55) in tRNA. In terms of biological role, responsible for synthesis of pseudouridine from uracil-55 in the psi GC loop of transfer RNAs. The sequence is that of tRNA pseudouridine synthase B from Chlamydia trachomatis serovar L2 (strain ATCC VR-902B / DSM 19102 / 434/Bu).